Here is a 98-residue protein sequence, read N- to C-terminus: Integration host factor subunit beta (98 aa).

The protein belongs to the bacterial histone-like protein family. As to quaternary structure, heterodimer of an alpha and a beta chain.

Its function is as follows. This protein is one of the two subunits of integration host factor, a specific DNA-binding protein that functions in genetic recombination as well as in transcriptional and translational control. The polypeptide is Integration host factor subunit beta (Pseudomonas entomophila (strain L48)).